The primary structure comprises 298 residues: Oxygen-dependent coproporphyrinogen-III oxidase (298 aa).

Residue Ser-90 coordinates substrate. His-94 and His-104 together coordinate a divalent metal cation. The Proton donor role is filled by His-104. Substrate is bound at residue 106–108 (NVR). 2 residues coordinate a divalent metal cation: His-143 and His-173. Positions 238–273 (YVEFNLVWDRGTLFGLQSGGRTESILMSLPPIVKWR) are important for dimerization. Substrate is bound at residue 256-258 (GGR).

It belongs to the aerobic coproporphyrinogen-III oxidase family. Homodimer. Requires a divalent metal cation as cofactor.

It is found in the cytoplasm. The catalysed reaction is coproporphyrinogen III + O2 + 2 H(+) = protoporphyrinogen IX + 2 CO2 + 2 H2O. It participates in porphyrin-containing compound metabolism; protoporphyrin-IX biosynthesis; protoporphyrinogen-IX from coproporphyrinogen-III (O2 route): step 1/1. Its function is as follows. Involved in the heme biosynthesis. Catalyzes the aerobic oxidative decarboxylation of propionate groups of rings A and B of coproporphyrinogen-III to yield the vinyl groups in protoporphyrinogen-IX. The protein is Oxygen-dependent coproporphyrinogen-III oxidase of Dechloromonas aromatica (strain RCB).